The sequence spans 72 residues: Translation initiation factor IF-1 (72 aa).

One can recognise an S1-like domain in the interval 2–72; sequence AKDDVIEVDG…TRGRITYRFK (71 aa).

Belongs to the IF-1 family. As to quaternary structure, component of the 30S ribosomal translation pre-initiation complex which assembles on the 30S ribosome in the order IF-2 and IF-3, IF-1 and N-formylmethionyl-tRNA(fMet); mRNA recruitment can occur at any time during PIC assembly.

The protein localises to the cytoplasm. One of the essential components for the initiation of protein synthesis. Stabilizes the binding of IF-2 and IF-3 on the 30S subunit to which N-formylmethionyl-tRNA(fMet) subsequently binds. Helps modulate mRNA selection, yielding the 30S pre-initiation complex (PIC). Upon addition of the 50S ribosomal subunit IF-1, IF-2 and IF-3 are released leaving the mature 70S translation initiation complex. In Lactococcus lactis subsp. lactis (strain IL1403) (Streptococcus lactis), this protein is Translation initiation factor IF-1.